The primary structure comprises 289 residues: Enoyl-CoA hydratase domain-containing protein 3, mitochondrial (289 aa).

A mitochondrion-targeting transit peptide spans 1–14 (MLLRGFSELLKCRG).

The protein belongs to the enoyl-CoA hydratase/isomerase family.

It is found in the mitochondrion. May play a role in fatty acid biosynthesis and insulin sensitivity. The polypeptide is Enoyl-CoA hydratase domain-containing protein 3, mitochondrial (echdc3) (Danio rerio (Zebrafish)).